A 204-amino-acid polypeptide reads, in one-letter code: Recombination protein RecR (204 aa).

Residues 58-75 form a C4-type zinc finger; the sequence is CSVCQNITDVGVDPCALC. The Toprim domain occupies 83–181; the sequence is SVICVVESPV…HVTKIARGIP (99 aa).

Belongs to the RecR family.

In terms of biological role, may play a role in DNA repair. It seems to be involved in an RecBC-independent recombinational process of DNA repair. It may act with RecF and RecO. This Pelodictyon phaeoclathratiforme (strain DSM 5477 / BU-1) protein is Recombination protein RecR.